The following is a 62-amino-acid chain: Photosystem II reaction center protein Z (62 aa).

Met-1 carries the post-translational modification N-formylmethionine. Topologically, residues Met-1 to Leu-4 are lumenal. A helical transmembrane segment spans residues Phe-5–Val-25. At Ala-26–Ser-36 the chain is on the cytoplasmic side. Residues Lys-37–Asn-58 form a helical membrane-spanning segment. Residues Phe-59–Val-62 lie on the Lumenal side of the membrane.

It belongs to the PsbZ family. As to quaternary structure, PSII is composed of 1 copy each of membrane proteins PsbA, PsbB, PsbC, PsbD, PsbE, PsbF, PsbH, PsbI, PsbJ, PsbK, PsbL, PsbM, PsbT, PsbX, PsbY, PsbZ, Psb30/Ycf12, peripheral proteins PsbO, CyanoQ (PsbQ), PsbU, PsbV and a large number of cofactors. It forms dimeric complexes. Part of a photosystem II (PSII) assembly intermediate complex PSII-I; crystallized from a strain deleted of psbJ, it forms monomeric PSII before addition of the oxygen evolving complex. PSII-I includes 3 assembly factors not found in mature PSII (Psb27, Psb28 and Psb34). PSII binds multiple chlorophylls, carotenoids and specific lipids. is required as a cofactor.

Its subcellular location is the cellular thylakoid membrane. Its function is as follows. May control the interaction of photosystem II (PSII) cores with the light-harvesting antenna, regulates electron flow through the 2 photosystem reaction centers. PSII is a light-driven water plastoquinone oxidoreductase, using light energy to abstract electrons from H(2)O, generating a proton gradient subsequently used for ATP formation. In terms of biological role, may also aid in binding of PsbK, Psb30/Ycf12 and the oxygen-evolving complex to PSII, at least in vitro. This chain is Photosystem II reaction center protein Z, found in Thermosynechococcus vestitus (strain NIES-2133 / IAM M-273 / BP-1).